Consider the following 296-residue polypeptide: Glycine N-acyltransferase-like protein (296 aa).

N6-acetyllysine; alternate is present on lysine 41. Lysine 41 is modified (N6-succinyllysine; alternate). At lysine 43 the chain carries N6-acetyllysine. The residue at position 48 (lysine 48) is an N6-acetyllysine; alternate. N6-succinyllysine; alternate is present on lysine 48. N6-acetyllysine is present on residues lysine 80 and lysine 83. N6-acetyllysine; alternate is present on residues lysine 183 and lysine 256. Lysine 183 and lysine 256 each carry N6-succinyllysine; alternate.

The protein belongs to the glycine N-acyltransferase family.

It localises to the mitochondrion. It catalyses the reaction an acyl-CoA + glycine = an N-acylglycine + CoA + H(+). Functionally, mitochondrial acyltransferase which transfers the acyl group to the N-terminus of glycine. Can conjugate a multitude of substrates to form a variety of N-acylglycines. The polypeptide is Glycine N-acyltransferase-like protein (Gm4952) (Mus musculus (Mouse)).